A 524-amino-acid polypeptide reads, in one-letter code: 2,3-bisphosphoglycerate-independent phosphoglycerate mutase (524 aa).

Mn(2+) contacts are provided by aspartate 13 and serine 63. Serine 63 serves as the catalytic Phosphoserine intermediate. Residues histidine 124, 154 to 155 (RD), arginine 186, arginine 192, 262 to 265 (RADR), and lysine 337 contribute to the substrate site. 5 residues coordinate Mn(2+): aspartate 404, histidine 408, aspartate 445, histidine 446, and histidine 464.

Belongs to the BPG-independent phosphoglycerate mutase family. Monomer. Mn(2+) is required as a cofactor.

The catalysed reaction is (2R)-2-phosphoglycerate = (2R)-3-phosphoglycerate. It participates in carbohydrate degradation; glycolysis; pyruvate from D-glyceraldehyde 3-phosphate: step 3/5. Functionally, catalyzes the interconversion of 2-phosphoglycerate and 3-phosphoglycerate. The polypeptide is 2,3-bisphosphoglycerate-independent phosphoglycerate mutase (Thermomicrobium roseum (strain ATCC 27502 / DSM 5159 / P-2)).